Here is an 80-residue protein sequence, read N- to C-terminus: Acyl carrier protein (80 aa).

In terms of domain architecture, Carrier spans 3-78 (DDTFSRIQSI…QVLEYIEAES (76 aa)). The residue at position 38 (S38) is an O-(pantetheine 4'-phosphoryl)serine.

Belongs to the acyl carrier protein (ACP) family. Post-translationally, 4'-phosphopantetheine is transferred from CoA to a specific serine of apo-ACP by AcpS. This modification is essential for activity because fatty acids are bound in thioester linkage to the sulfhydryl of the prosthetic group.

The protein resides in the plastid. The protein localises to the chloroplast. It participates in lipid metabolism; fatty acid biosynthesis. Functionally, carrier of the growing fatty acid chain in fatty acid biosynthesis. The protein is Acyl carrier protein of Trieres chinensis (Marine centric diatom).